The primary structure comprises 265 residues: Indole-3-glycerol phosphate synthase (265 aa).

It belongs to the TrpC family.

It catalyses the reaction 1-(2-carboxyphenylamino)-1-deoxy-D-ribulose 5-phosphate + H(+) = (1S,2R)-1-C-(indol-3-yl)glycerol 3-phosphate + CO2 + H2O. Its pathway is amino-acid biosynthesis; L-tryptophan biosynthesis; L-tryptophan from chorismate: step 4/5. This is Indole-3-glycerol phosphate synthase from Xanthomonas euvesicatoria pv. vesicatoria (strain 85-10) (Xanthomonas campestris pv. vesicatoria).